Reading from the N-terminus, the 675-residue chain is Methionine--tRNA ligase (675 aa).

The short motif at 15-25 (PYANGSIHLGH) is the 'HIGH' region element. Positions 146, 149, 159, and 162 each coordinate Zn(2+). The 'KMSKS' region motif lies at 332–336 (KMSKS). Lysine 335 contributes to the ATP binding site. The tRNA-binding domain occupies 573 to 675 (DFAKVDMRIA…SGAQPGMQVK (103 aa)).

This sequence belongs to the class-I aminoacyl-tRNA synthetase family. MetG type 1 subfamily. Homodimer. Zn(2+) is required as a cofactor.

The protein resides in the cytoplasm. It carries out the reaction tRNA(Met) + L-methionine + ATP = L-methionyl-tRNA(Met) + AMP + diphosphate. Functionally, is required not only for elongation of protein synthesis but also for the initiation of all mRNA translation through initiator tRNA(fMet) aminoacylation. The polypeptide is Methionine--tRNA ligase (Serratia proteamaculans (strain 568)).